Consider the following 271-residue polypeptide: Aquaporin-11 (271 aa).

At Met-1–Thr-14 the chain is on the cytoplasmic side. The chain crosses the membrane as a helical span at residues Cys-15–Ala-35. The Lumenal portion of the chain corresponds to Arg-36–Arg-41. Residues Pro-42–His-62 form a helical membrane-spanning segment. At Glu-63–Thr-76 the chain is on the cytoplasmic side. A helical membrane pass occupies residues Trp-77–Ala-97. Over Ser-98–Ala-166 the chain is Lumenal. Positions Asn-99–Cys-101 match the NPC motif. Residues Ile-167–Val-187 traverse the membrane as a helical segment. The Cytoplasmic segment spans residues Arg-188–His-194. The chain crosses the membrane as a helical span at residues Val-195–Phe-215. The NPA signature appears at Asn-216–Ala-218. At Asn-216–Lys-234 the chain is on the lumenal side. Residues Phe-235–Ser-255 traverse the membrane as a helical segment. Residues Phe-256–Glu-271 are Cytoplasmic-facing.

Belongs to the MIP/aquaporin (TC 1.A.8) family. AQP11/AQP12 subfamily. As to quaternary structure, homodimer; disulfide-linked. Homotetramer. Can also form homomultimer. Post-translationally, not glycosylated. In terms of tissue distribution, expressed in retina specifically at retinal Mueller glial cells. Expressed in adult testis, in the elongated spermatids (ES) and in residual bodies inside Sertoli cells.

It is found in the endoplasmic reticulum membrane. The protein resides in the cytoplasmic vesicle membrane. It localises to the cell membrane. The enzyme catalyses H2O(in) = H2O(out). It carries out the reaction glycerol(in) = glycerol(out). It catalyses the reaction H2O2(out) = H2O2(in). In terms of biological role, channel protein that facilitates the transport of water, glycerol and hydrogen peroxide across membrane of cell or organelles guaranteeing intracellular homeostasis in several organes like liver, kidney and brain. In situation of stress, participates in endoplasmic reticulum (ER) homeostasis by regulating redox homeostasis through the transport of hydrogen peroxide across the endoplasmic reticulum membrane thereby regulating the oxidative stress through the NADPH oxidase 2 pathway. Plays a role by maintaining an environment suitable for translation or protein foldings in the ER lumen namely by participating in the PKD1 glycosylation processing resulting in regulation of PKD1 membrane trafficking thereby preventing the accumulation of unfolding protein in ER. Plays a role in the proximal tubule function by regulating its endosomal acidification. May play a role in postnatal kidney development. In Rattus norvegicus (Rat), this protein is Aquaporin-11.